Here is a 115-residue protein sequence, read N- to C-terminus: Peptidyl-tRNA hydrolase (115 aa).

This sequence belongs to the PTH2 family.

The protein localises to the cytoplasm. It carries out the reaction an N-acyl-L-alpha-aminoacyl-tRNA + H2O = an N-acyl-L-amino acid + a tRNA + H(+). In terms of biological role, the natural substrate for this enzyme may be peptidyl-tRNAs which drop off the ribosome during protein synthesis. This is Peptidyl-tRNA hydrolase from Archaeoglobus fulgidus (strain ATCC 49558 / DSM 4304 / JCM 9628 / NBRC 100126 / VC-16).